Reading from the N-terminus, the 261-residue chain is Signal recognition particle SEC65 subunit (261 aa).

The protein belongs to the SRP19 family. In terms of assembly, fungal signal recognition particle consists of a 7S RNA molecule (scR1) and at least six protein subunits: SRP72, SRP68, SRP54, SEC65, SRP21 and SRP14.

It localises to the cytoplasm. Functionally, signal-recognition-particle assembly has a crucial role in targeting secretory proteins to the rough endoplasmic reticulum membrane. It must be involved intimately in the translocation of a wide variety of protein substrates. In Eremothecium gossypii (strain ATCC 10895 / CBS 109.51 / FGSC 9923 / NRRL Y-1056) (Yeast), this protein is Signal recognition particle SEC65 subunit (SEC65).